A 527-amino-acid polypeptide reads, in one-letter code: Optineurin (527 aa).

Disordered regions lie at residues 1-32 (MSHQPLSCLTEKEDSPTESTGNGPPYLAHPNL) and 101-143 (SHEN…KDQL). Positions 38–170 (EELLQQMKEL…VSELQLKLNS (133 aa)) form a coiled coil. Residues 58–209 (MKLNNQAMKG…GPTRTVSTSR (152 aa)) form an interaction with Rab8 region. The LIR signature appears at 176–181 (DSFVEI). Phosphoserine; by TBK1 is present on serine 177. Positions 186-197 (GEAEGSVKEIKH) are enriched in basic and acidic residues. Disordered regions lie at residues 186-214 (GEAEGSVKEIKHSPGPTRTVSTSRALSKY) and 262-292 (SDFEKKASNRSEIETQTEGSTEKENDEEKGL). Serine 198 carries the phosphoserine modification. The span at 201–210 (PTRTVSTSRA) shows a compositional bias: polar residues. Residues 239–458 (CLREGNQKVE…LLKENDAFED (220 aa)) are a coiled coil. Composition is skewed to basic and acidic residues over residues 262-274 (SDFEKKASNRSEI) and 281-292 (STEKENDEEKGL). The interval 361–527 (TRKESEKVDR…LQIHVMDCII (167 aa)) is interaction with HD. An interaction with MYO6 region spans residues 362 to 470 (RKESEKVDRA…RQSLMEMQSR (109 aa)). The UBAN motif lies at 424 to 429 (DFHAER). The residue at position 476 (serine 476) is a Phosphoserine. The CCHC NOA-type zinc finger occupies 497–527 (QRNIPIHSCPKCGEVLPDIDTLQIHVMDCII). Zn(2+) is bound by residues cysteine 505, cysteine 508, histidine 521, and cysteine 525.

In terms of assembly, self-associates. Interacts with HD. Interacts with GTF3A. Interacts with MYO6. Interacts (via UBAN) with ubiquitinated TFRC. Interacts with GTP-bound Rab8 (RAB8A and/or RAB8B). Interacts with TBC1D17. Interacts with TBK1. Interacts with TRAF3. Binds to linear ubiquitin chains. Interacts with LC3 family members MAP1LC3A, MAP1LC3B, GABARAP, GABARAPL1 and GABARAPL2; OPTN phosphorylation increases the association (at least with MAP1LC3B). Interacts with RAB12; the interaction may be indirect. Interacts with TBK1; this interaction leads to the Golgi localization of TBK1 and its subsequent activation. Interacts with palmitoyltransferase ZDHHC17/HIP14; the interaction does not lead to palmitoylation of OPTN. Interacts with CYLD. Interacts with TOM1; the interaction is indirect and is mediated by MYO6, which acts as a bridge between TOM1 and OPTN. Interacts with USP12; the interaction is independent of USP12 deubiquitinase activity and may be involved in regulation of autophagic flux. Phosphorylated by TBK1, leading to restrict bacterial proliferation in case of infection.

The protein resides in the cytoplasm. The protein localises to the perinuclear region. It localises to the golgi apparatus. It is found in the trans-Golgi network. Its subcellular location is the cytoplasmic vesicle. The protein resides in the autophagosome. The protein localises to the recycling endosome. Functionally, plays an important role in the maintenance of the Golgi complex, in membrane trafficking, in exocytosis, through its interaction with myosin VI and Rab8. Links myosin VI to the Golgi complex and plays an important role in Golgi ribbon formation. Negatively regulates the induction of IFNB in response to RNA virus infection. Plays a neuroprotective role in the eye and optic nerve. Probably part of the TNF-alpha signaling pathway that can shift the equilibrium toward induction of cell death. May act by regulating membrane trafficking and cellular morphogenesis via a complex that contains Rab8 and huntingtin (HD). Mediates the interaction of Rab8 with the probable GTPase-activating protein TBC1D17 during Rab8-mediated endocytic trafficking, such as that of transferrin receptor (TFRC/TfR); regulates Rab8 recruitment to tubules emanating from the endocytic recycling compartment. Autophagy receptor that interacts directly with both the cargo to become degraded and an autophagy modifier of the MAP1 LC3 family; targets ubiquitin-coated bacteria (xenophagy) and appears to function in the same pathway as SQSTM1 and CALCOCO2/NDP52. This chain is Optineurin (OPTN), found in Pongo abelii (Sumatran orangutan).